The sequence spans 185 residues: uncharacterized protein (185 aa).

This sequence belongs to the EUO family.

This is an uncharacterized protein from Chlamydia muridarum (strain MoPn / Nigg).